We begin with the raw amino-acid sequence, 482 residues long: UDP-N-acetylmuramate--L-alanine ligase (482 aa).

Residue Gly-123–Thr-129 participates in ATP binding.

Belongs to the MurCDEF family.

It localises to the cytoplasm. The enzyme catalyses UDP-N-acetyl-alpha-D-muramate + L-alanine + ATP = UDP-N-acetyl-alpha-D-muramoyl-L-alanine + ADP + phosphate + H(+). It functions in the pathway cell wall biogenesis; peptidoglycan biosynthesis. In terms of biological role, cell wall formation. The chain is UDP-N-acetylmuramate--L-alanine ligase from Pseudomonas putida (strain W619).